A 119-amino-acid polypeptide reads, in one-letter code: Large ribosomal subunit protein bL20c (119 aa).

Belongs to the bacterial ribosomal protein bL20 family.

It is found in the plastid. It localises to the chloroplast. In terms of biological role, binds directly to 23S ribosomal RNA and is necessary for the in vitro assembly process of the 50S ribosomal subunit. It is not involved in the protein synthesizing functions of that subunit. The polypeptide is Large ribosomal subunit protein bL20c (Amborella trichopoda).